We begin with the raw amino-acid sequence, 81 residues long: Three-finger toxin MALT0057C (81 aa).

Residues 1–21 (MKTLLLTLVVVTIVCLDFGHT) form the signal peptide. 4 disulfides stabilise this stretch: C24–C43, C38–C60, C62–C73, and C74–C79.

The protein belongs to the three-finger toxin family. Short-chain subfamily. Type I alpha-neurotoxin sub-subfamily. As to expression, expressed by the venom gland.

It localises to the secreted. Functionally, binds to muscle nicotinic acetylcholine receptor (nAChR) and inhibit acetylcholine from binding to the receptor, thereby impairing neuromuscular transmission. The chain is Three-finger toxin MALT0057C from Micrurus altirostris (Uruguayan coral snake).